The following is a 169-amino-acid chain: NADH-quinone oxidoreductase subunit B (169 aa).

The [4Fe-4S] cluster site is built by Cys42, Cys43, Cys107, and Cys136.

It belongs to the complex I 20 kDa subunit family. As to quaternary structure, NDH-1 is composed of 14 different subunits. Subunits NuoB, C, D, E, F, and G constitute the peripheral sector of the complex. It depends on [4Fe-4S] cluster as a cofactor.

Its subcellular location is the cell inner membrane. The catalysed reaction is a quinone + NADH + 5 H(+)(in) = a quinol + NAD(+) + 4 H(+)(out). In terms of biological role, NDH-1 shuttles electrons from NADH, via FMN and iron-sulfur (Fe-S) centers, to quinones in the respiratory chain. The immediate electron acceptor for the enzyme in this species is believed to be ubiquinone. Couples the redox reaction to proton translocation (for every two electrons transferred, four hydrogen ions are translocated across the cytoplasmic membrane), and thus conserves the redox energy in a proton gradient. This Nitratiruptor sp. (strain SB155-2) protein is NADH-quinone oxidoreductase subunit B.